A 555-amino-acid polypeptide reads, in one-letter code: Serine/threonine-protein kinase Nek4 (555 aa).

The Protein kinase domain occupies 4–258 (YEVLEQIGKG…ANELLNHPHL (255 aa)). Residues 10–18 (IGKGSFGSA) and K33 contribute to the ATP site. The active-site Proton acceptor is D129. Disordered regions lie at residues 288–328 (LKER…MFNG), 346–372 (QRQEEAKKQSGAARTPRVAGTSAKAST), and 443–477 (NRETASRREVARHSFSSPPCPPHGEDNSNGSITKD). Over residues 304-320 (PSVSDTEAGSVSSSGKA) the composition is skewed to polar residues.

The protein belongs to the protein kinase superfamily. NEK Ser/Thr protein kinase family. NIMA subfamily.

The catalysed reaction is L-seryl-[protein] + ATP = O-phospho-L-seryl-[protein] + ADP + H(+). It carries out the reaction L-threonyl-[protein] + ATP = O-phospho-L-threonyl-[protein] + ADP + H(+). May be involved in plant development processes. This chain is Serine/threonine-protein kinase Nek4 (NEK4), found in Arabidopsis thaliana (Mouse-ear cress).